The primary structure comprises 581 residues: Transcription factor GTE2 (581 aa).

A disordered region spans residues 130–153 (VKKTKTKKKKIGHGQKRSNPFATD). The segment covering 131–145 (KKTKTKKKKIGHGQK) has biased composition (basic residues). The 107-residue stretch at 169–275 (KVLKSMMTTC…SQFDVWFNPT (107 aa)) folds into the Bromo domain. Disordered stretches follow at residues 329 to 399 (PLLP…KREM) and 470 to 581 (KRQG…KEAP). Over residues 346-365 (PSPPPSPVQPPPPPSPPPQP) the composition is skewed to pro residues. Positions 389-470 (PKAKDPNKRE…NYRKMASKIK (82 aa)) constitute an NET domain. Basic and acidic residues-rich tracts occupy residues 390–399 (KAKDPNKREM) and 493–503 (SAEKRGRKGGE). Residues 504–517 (AGEEDVDIGEDIPV) are compositionally biased toward acidic residues. Low complexity predominate over residues 530 to 564 (TAAAASGGSSSSGSFSSSGSSSSSDSESGSSSGSD).

It is found in the nucleus. This chain is Transcription factor GTE2 (GTE2), found in Arabidopsis thaliana (Mouse-ear cress).